We begin with the raw amino-acid sequence, 150 residues long: Ribosome maturation factor RimP (150 aa).

It belongs to the RimP family.

It is found in the cytoplasm. In terms of biological role, required for maturation of 30S ribosomal subunits. This Acidithiobacillus ferrooxidans (strain ATCC 23270 / DSM 14882 / CIP 104768 / NCIMB 8455) (Ferrobacillus ferrooxidans (strain ATCC 23270)) protein is Ribosome maturation factor RimP.